Here is a 205-residue protein sequence, read N- to C-terminus: Retron Vc95 putative HNH endonuclease (205 aa).

Functionally, putative HNH endonuclease component of antiviral defense system retron Vc95, composed of a non-coding RNA (ncRNA), a reverse transcriptase (RT), a probable ATP-binding protein and this protein. Expression of retron Vc95 confers protection against bacteriophages T2, T4 and T6. At multiplicity of infection (MOI) of 0.02 cultures slow growth when infected with T4 but do not collapse, at MOI 2 cultures enter growth stasis. In Vibrio cholerae serotype O1 biovar El Tor, this protein is Retron Vc95 putative HNH endonuclease.